The chain runs to 226 residues: PKHD-type hydroxylase BP3529 (226 aa).

The 101-residue stretch at 78 to 178 (KIFPPLFNRY…RISAFFWLQS (101 aa)) folds into the Fe2OG dioxygenase domain. 3 residues coordinate Fe cation: histidine 96, aspartate 98, and histidine 159. Arginine 169 contacts 2-oxoglutarate.

Fe(2+) is required as a cofactor. Requires L-ascorbate as cofactor.

The chain is PKHD-type hydroxylase BP3529 from Bordetella pertussis (strain Tohama I / ATCC BAA-589 / NCTC 13251).